The sequence spans 115 residues: Non-specific lipid-transfer protein Cor a 8.0101 (115 aa).

Positions 1–23 are cleaved as a signal peptide; the sequence is MGSLKLVCAVLLCMMVAAPVARA. 4 disulfide bridges follow: Cys27–Cys74, Cys37–Cys51, Cys52–Cys97, and Cys72–Cys111.

Belongs to the plant LTP family. Monomer. As to expression, expressed in seed (at protein level). Expressed in seed.

Functionally, plant non-specific lipid-transfer proteins transfer phospholipids as well as galactolipids across membranes. May play a role in wax or cutin deposition in the cell walls of expanding epidermal cells and certain secretory tissues. This chain is Non-specific lipid-transfer protein Cor a 8.0101, found in Corylus avellana (European hazel).